A 377-amino-acid chain; its full sequence is uncharacterized protein (377 aa).

This is an uncharacterized protein from Bacillus subtilis (strain 168).